The primary structure comprises 525 residues: GMP synthase [glutamine-hydrolyzing] (525 aa).

The 199-residue stretch at 9 to 207 (RILILDFGSQ…VRDICQCEAL (199 aa)) folds into the Glutamine amidotransferase type-1 domain. C86 (nucleophile) is an active-site residue. Active-site residues include H181 and E183. The region spanning 208 to 400 (WTPAKIIDDA…LGLPYDMLYR (193 aa)) is the GMPS ATP-PPase domain. 235–241 (SGGVDSS) is a binding site for ATP.

As to quaternary structure, homodimer.

It carries out the reaction XMP + L-glutamine + ATP + H2O = GMP + L-glutamate + AMP + diphosphate + 2 H(+). It participates in purine metabolism; GMP biosynthesis; GMP from XMP (L-Gln route): step 1/1. Catalyzes the synthesis of GMP from XMP. In Salmonella typhi, this protein is GMP synthase [glutamine-hydrolyzing].